A 232-amino-acid chain; its full sequence is 7-cyano-7-deazaguanine synthase (232 aa).

8-18 is a binding site for ATP; that stretch reads FSGGQDSTTCL. Zn(2+) contacts are provided by cysteine 187, cysteine 196, cysteine 199, and cysteine 202.

This sequence belongs to the QueC family. The cofactor is Zn(2+).

It carries out the reaction 7-carboxy-7-deazaguanine + NH4(+) + ATP = 7-cyano-7-deazaguanine + ADP + phosphate + H2O + H(+). Its pathway is purine metabolism; 7-cyano-7-deazaguanine biosynthesis. Functionally, catalyzes the ATP-dependent conversion of 7-carboxy-7-deazaguanine (CDG) to 7-cyano-7-deazaguanine (preQ(0)). The polypeptide is 7-cyano-7-deazaguanine synthase (Vibrio vulnificus (strain YJ016)).